A 416-amino-acid polypeptide reads, in one-letter code: MSGHRSTRKRCGDSHPESPVGFGHMSTTGCILNKLFQLPTPPLSRHQLKRLEEHRYQSAGRSLLEPLMQGYWEWLVGRVPSWIAPNLITIIGLSINICTTILLVFYCPTATEQAPLWAYIACACGLFIYQSLDAIDGKQARRTNSSSPLGELFDHGCDSLSTVFVVLGTCIAVQLGTNPDWMFFCCFAGTFMFYCAHWQTYVSGTLRFGIIDVTEVQIFIIIMHLLAVIGGPPFWQSMIPVLNIQMKLFPALCTVAGTIFSCTNYFRVIFTGGVGKNGSTIAGTSVLSPFLHIGSVITLAVMIYKKSAVQLFEKHPCLYILTFGFVSAKITNKLVVAHMTKSEMHLHDTAFIGPALLFLDQYFNSFIDEYIVLWIALVFSFFDLIRYCVSVCNQIASHLHIHVFRIKTSTAHSNHH.

The disordered stretch occupies residues 1 to 20 (MSGHRSTRKRCGDSHPESPV). Ser-18 carries the phosphoserine modification. Residue Thr-40 is modified to Phosphothreonine. CDP-choline is bound at residue Asn-86. The next 2 membrane-spanning stretches (helical) occupy residues 89 to 108 (TIIG…FYCP) and 116 to 133 (LWAY…QSLD). Asp-133 is a Mg(2+) binding site. Asn-144 carries an N-linked (GlcNAc...) asparagine glycan. Glu-151 is a CDP-choline binding site. Asp-154 lines the Mg(2+) pocket. His-155 (proton acceptor) is an active-site residue. The next 8 helical transmembrane spans lie at 156 to 176 (GCDS…VQLG), 180 to 199 (DWMF…AHWQ), 210 to 230 (IIDV…AVIG), 246 to 267 (MKLF…NYFR), 286 to 306 (VLSP…IYKK), 315 to 334 (HPCL…TNKL), 349 to 363 (TAFI…DQYF), and 368 to 388 (DEYI…IRYC). Asp-158 contributes to the Mg(2+) binding site.

This sequence belongs to the CDP-alcohol phosphatidyltransferase class-I family. Homodimer. It depends on Mg(2+) as a cofactor. Requires Mn(2+) as cofactor.

The protein localises to the endoplasmic reticulum membrane. It localises to the nucleus membrane. The catalysed reaction is CDP-ethanolamine + a 1,2-diacyl-sn-glycerol = a 1,2-diacyl-sn-glycero-3-phosphoethanolamine + CMP + H(+). It carries out the reaction CDP-choline + a 1,2-diacyl-sn-glycerol = a 1,2-diacyl-sn-glycero-3-phosphocholine + CMP + H(+). The enzyme catalyses 1-O-alkyl-2-acyl-sn-glycerol + CDP-choline = a 1-O-alkyl-2-acyl-sn-glycero-3-phosphocholine + CMP + H(+). It catalyses the reaction a 1-O-(1Z-alkenyl)-2-acyl-sn-glycerol + CDP-choline = a 1-O-(1Z-alkenyl)-2-acyl-sn-glycero-3-phosphocholine + CMP + H(+). The catalysed reaction is 1,2-dioctanoyl-sn-glycerol + CDP-choline = 1,2-dioctanoyl-sn-glycero-3-phosphocholine + CMP + H(+). It carries out the reaction 1,2-didecanoyl-sn-glycerol + CDP-choline = 1,2-didecanoyl-sn-glycero-3-phosphocholine + CMP + H(+). The enzyme catalyses CDP-choline + 1,2-di-(9Z-octadecenoyl)-sn-glycerol = 1,2-di-(9Z-octadecenoyl)-sn-glycero-3-phosphocholine + CMP + H(+). It catalyses the reaction 1-hexadecanoyl-2-(9Z-octadecenoyl)-sn-glycerol + CDP-choline = 1-hexadecanoyl-2-(9Z-octadecenoyl)-sn-glycero-3-phosphocholine + CMP + H(+). The catalysed reaction is CDP-ethanolamine + 1,2-di-(9Z-octadecenoyl)-sn-glycerol = 1,2-di-(9Z-octadecenoyl)-sn-glycero-3-phosphoethanolamine + CMP + H(+). It carries out the reaction 1-hexadecanoyl-2-(9Z-octadecenoyl)-sn-glycerol + CDP-ethanolamine = 1-hexadecanoyl-2-(9Z-octadecenoyl)-sn-glycero-3-phosphoethanolamine + CMP + H(+). The enzyme catalyses 1-hexadecanoyl-2-(4Z,7Z,10Z,13Z,16Z,19Z-docosahexaenoyl)-sn-glycerol + CDP-choline = 1-hexadecanoyl-2-(4Z,7Z,10Z,13Z,16Z,19Z-docosahexaenoyl)-sn-glycero-3-phosphocholine + CMP + H(+). It catalyses the reaction 1,2-di-(9Z-hexadecenoyl)-sn-glycerol + CDP-choline = 1,2-di-(9Z-hexadecenoyl)-sn-glycero-3-phosphocholine + CMP + H(+). The catalysed reaction is 1,2-di-(9Z-hexadecenoyl)-sn-glycerol + CDP-ethanolamine = 1,2-di-(9Z-hexadecenoyl)-sn-glycero-3-phosphoethanolamine + CMP + H(+). It carries out the reaction 1-O-hexadecyl-2-acetyl-sn-glycerol + CDP-choline = 1-O-hexadecyl-2-acetyl-sn-glycero-3-phosphocholine + CMP + H(+). The enzyme catalyses 1-O-hexadecyl-2-(5Z,8Z,11Z,14Z-eicosatetraenoyl)-sn-glycerol + CDP-choline = 1-O-hexadecyl-2-(5Z,8Z,11Z,14Z)-eicosatetraenoyl-sn-glycero-3-phosphocholine + CMP + H(+). Its pathway is phospholipid metabolism; phosphatidylethanolamine biosynthesis; phosphatidylethanolamine from ethanolamine: step 3/3. It functions in the pathway phospholipid metabolism; phosphatidylcholine biosynthesis; phosphatidylcholine from phosphocholine: step 2/2. Its function is as follows. Catalyzes both phosphatidylcholine and phosphatidylethanolamine biosynthesis from CDP-choline and CDP-ethanolamine, respectively. Involved in protein-dependent process of phospholipid transport to distribute phosphatidyl choline to the lumenal surface. Has a higher cholinephosphotransferase activity than ethanolaminephosphotransferase activity. The protein is Choline/ethanolaminephosphotransferase 1 of Rattus norvegicus (Rat).